We begin with the raw amino-acid sequence, 364 residues long: Medium-wave-sensitive opsin 2 (364 aa).

The interval 1–23 (MAQQWSLQRLAGRHPQDSYEDST) is disordered. At 1 to 52 (MAQQWSLQRLAGRHPQDSYEDSTQSSIFTYTNSNSTRGPFEGPNYHIAPRWV) the chain is on the extracellular side. A required for 11-cis-retinal regeneration region spans residues 17–43 (DSYEDSTQSSIFTYTNSNSTRGPFEGP). N-linked (GlcNAc...) asparagine glycosylation occurs at Asn-34. Residues 53–77 (YHLTSVWMIFVVIASVFTNGLVLAA) traverse the membrane as a helical segment. The Cytoplasmic portion of the chain corresponds to 78 to 89 (TMKFKKLRHPLN). Residues 90-115 (WILVNLAVADLAETVIASTISVVNQV) form a helical membrane-spanning segment. The Extracellular portion of the chain corresponds to 116–129 (YGYFVLGHPMCVLE). A disulfide bond links Cys-126 and Cys-203. The helical transmembrane segment at 130–149 (GYTVSLCGITGLWSLAIISW) threads the bilayer. Over 150-168 (ERWMVVCKPFGNVRFDAKL) the chain is Cytoplasmic. The chain crosses the membrane as a helical span at residues 169–192 (AIVGIAFSWIWAAVWTAPPIFGWS). The Extracellular portion of the chain corresponds to 193 to 218 (RYWPHGLKTSCGPDVFSGSSYPGVQS). Residues 219–246 (YMIVLMVTCCITPLSIIVLCYLQVWLAI) traverse the membrane as a helical segment. The Cytoplasmic segment spans residues 247-268 (RAVAKQQKESESTQKAEKEVTR). Residues 269-292 (MVVVMVLAFCFCWGPYAFFACFAA) form a helical membrane-spanning segment. Residues 293–300 (ANPGYPFH) lie on the Extracellular side of the membrane. Residues 301–325 (PLMAALPAFFAKSATIYNPVIYVFM) traverse the membrane as a helical segment. The residue at position 312 (Lys-312) is an N6-(retinylidene)lysine. The Cytoplasmic segment spans residues 326 to 364 (NRQFRNCILQLFGKKVDDGSELSSASKTEVSSVSSVSPA).

The protein belongs to the G-protein coupled receptor 1 family. Opsin subfamily. In terms of processing, N-glycosylated. O-glycosylated. Post-translationally, phosphorylated on some or all of the serine and threonine residues present in the C-terminal region.

The protein localises to the cell membrane. Functionally, visual pigments are the light-absorbing molecules that mediate vision. They consist of an apoprotein, opsin, covalently linked to cis-retinal. The protein is Medium-wave-sensitive opsin 2 of Homo sapiens (Human).